Consider the following 382-residue polypeptide: Nitric oxide reductase FlRd-NAD(+) reductase (382 aa).

This sequence belongs to the FAD-dependent oxidoreductase family. It depends on FAD as a cofactor.

Its subcellular location is the cytoplasm. The catalysed reaction is 2 reduced [nitric oxide reductase rubredoxin domain] + NAD(+) + H(+) = 2 oxidized [nitric oxide reductase rubredoxin domain] + NADH. It functions in the pathway nitrogen metabolism; nitric oxide reduction. One of at least two accessory proteins for anaerobic nitric oxide (NO) reductase. Reduces the rubredoxin moiety of NO reductase. The protein is Nitric oxide reductase FlRd-NAD(+) reductase of Vibrio vulnificus (strain CMCP6).